The primary structure comprises 170 residues: ATP synthase subunit b (170 aa).

A helical membrane pass occupies residues 22-44 (IINLAVVVFGLYKFLPGFLGKIL).

This sequence belongs to the ATPase B chain family. In terms of assembly, F-type ATPases have 2 components, F(1) - the catalytic core - and F(0) - the membrane proton channel. F(1) has five subunits: alpha(3), beta(3), gamma(1), delta(1), epsilon(1). F(0) has four main subunits: a(1), b(1), b'(1) and c(10-14). The alpha and beta chains form an alternating ring which encloses part of the gamma chain. F(1) is attached to F(0) by a central stalk formed by the gamma and epsilon chains, while a peripheral stalk is formed by the delta, b and b' chains.

The protein resides in the cellular thylakoid membrane. Its function is as follows. F(1)F(0) ATP synthase produces ATP from ADP in the presence of a proton or sodium gradient. F-type ATPases consist of two structural domains, F(1) containing the extramembraneous catalytic core and F(0) containing the membrane proton channel, linked together by a central stalk and a peripheral stalk. During catalysis, ATP synthesis in the catalytic domain of F(1) is coupled via a rotary mechanism of the central stalk subunits to proton translocation. Component of the F(0) channel, it forms part of the peripheral stalk, linking F(1) to F(0). The sequence is that of ATP synthase subunit b from Prochlorococcus marinus (strain NATL1A).